The primary structure comprises 332 residues: Anthranilate phosphoribosyltransferase (332 aa).

5-phospho-alpha-D-ribose 1-diphosphate contacts are provided by residues G78, G81 to D82, S86, N88 to T91, K106 to S114, and S118. Position 78 (G78) interacts with anthranilate. S90 contacts Mg(2+). N109 serves as a coordination point for anthranilate. R163 is an anthranilate binding site. Positions 222 and 223 each coordinate Mg(2+).

The protein belongs to the anthranilate phosphoribosyltransferase family. As to quaternary structure, homodimer. Mg(2+) serves as cofactor.

The enzyme catalyses N-(5-phospho-beta-D-ribosyl)anthranilate + diphosphate = 5-phospho-alpha-D-ribose 1-diphosphate + anthranilate. It functions in the pathway amino-acid biosynthesis; L-tryptophan biosynthesis; L-tryptophan from chorismate: step 2/5. Catalyzes the transfer of the phosphoribosyl group of 5-phosphorylribose-1-pyrophosphate (PRPP) to anthranilate to yield N-(5'-phosphoribosyl)-anthranilate (PRA). In Staphylococcus aureus (strain USA300), this protein is Anthranilate phosphoribosyltransferase.